A 320-amino-acid polypeptide reads, in one-letter code: Nod factor export ATP-binding protein I (320 aa).

In terms of domain architecture, ABC transporter spans 15-245 (VSATGVWKKR…LGALKILEID (231 aa)). ATP is bound at residue 47 to 54 (GTNGAGKS).

The protein belongs to the ABC transporter superfamily. Lipooligosaccharide exporter (TC 3.A.1.102) family. As to quaternary structure, the complex is composed of two ATP-binding proteins (NodI) and two transmembrane proteins (NodJ).

The protein localises to the cell inner membrane. Functionally, part of the ABC transporter complex NodIJ involved in the export of the nodulation factors (Nod factors), the bacterial signal molecules that induce symbiosis and subsequent nodulation induction. Nod factors are LCO (lipo-chitin oligosaccharide), a modified beta-1,4-linked N-acetylglucosamine oligosaccharide. This subunit is responsible for energy coupling to the transport system. This Azorhizobium caulinodans (strain ATCC 43989 / DSM 5975 / JCM 20966 / LMG 6465 / NBRC 14845 / NCIMB 13405 / ORS 571) protein is Nod factor export ATP-binding protein I.